The primary structure comprises 625 residues: MTTPQHLSDRYELGEILGFGGMSEVHLARDLRLHRDVAVKVLRADLARDPSFYLRFRREAQNAAALNHPAIVAVYDTGEAETPNGPLPYIVMEYVDGVTLRDIVHTDGPIAPRRAIEIIADACQALNFSHQHGIIHRDVKPANIMISKNNAVKVMDFGIARALADTGNSVTQTAAVIGTAQYLSPEQARGETVDARSDVYSLGCVLYEILTGEPPFIGDSPVAVAYQHVREDPVPPSRRHADVTPELDAVVLKALAKNPDNRYQTAAEMRADLIRVHEGQAPDAPKVLTDAERTSMLAAPPADRAGAATQDMPVPRPAGYSKQRSTSVARWLIAVAVLAVLTVVVTVAINMVGGNPRNVQVPDVAEQSADDAQAALQNRGFKTVIDRQPDNEVPPGLVIGTDPEAGSELGAGEQVTINVSTGPEQALVPDVAGLTPTQARQKLKDAGFEKFRESPSPSTPEQKGRVLATNPQANQTAAIINEITIVVGAGPEDAPVLSCAGQNAESCKAILAAGGFTNTVVVEVDNPAAAGQVVGTEPADGQSVPKDTVIQIRVSKGNQFVMPDLVGQFWSDAYPRLTALGWTGVLDKGPDVRDSGQRTNAVVTQSPSAGTPVNKDAKITLSFAA.

Over 1–331 (MTTPQHLSDR…KQRSTSVARW (331 aa)) the chain is Cytoplasmic. The region spanning 11 to 274 (YELGEILGFG…TAAEMRADLI (264 aa)) is the Protein kinase domain. Residues 17 to 25 (LGFGGMSEV), Lys-40, and 93 to 95 (EYV) each bind ATP. The active-site Proton acceptor is the Asp-138. Residues 140-143 (KPAN) and Asp-156 contribute to the ATP site. Mg(2+) contacts are provided by Asn-143 and Asp-156. A Phosphoserine; by autocatalysis modification is found at Ser-169. Thr-171, Thr-173, and Thr-294 each carry phosphothreonine; by autocatalysis. Ser-295 carries the phosphoserine; by autocatalysis modification. Residues 302-321 (ADRAGAATQDMPVPRPAGYS) form a disordered region. Thr-309 carries the post-translational modification Phosphothreonine; by autocatalysis. The helical transmembrane segment at 332 to 352 (LIAVAVLAVLTVVVTVAINMV) threads the bilayer. Over 353-625 (GGNPRNVQVP…DAKITLSFAA (273 aa)) the chain is Extracellular. PASTA domains follow at residues 355-421 (NPRN…NVST), 422-489 (GPEQ…VVGA), 490-556 (GPED…RVSK), and 557-625 (GNQF…SFAA). The interval 591–612 (DVRDSGQRTNAVVTQSPSAGTP) is disordered. The span at 597–611 (QRTNAVVTQSPSAGT) shows a compositional bias: polar residues.

The protein belongs to the protein kinase superfamily. Ser/Thr protein kinase family. Homodimer. In terms of processing, autophosphorylated. Dephosphorylated by PstP.

The protein resides in the cell membrane. It catalyses the reaction L-seryl-[protein] + ATP = O-phospho-L-seryl-[protein] + ADP + H(+). The catalysed reaction is L-threonyl-[protein] + ATP = O-phospho-L-threonyl-[protein] + ADP + H(+). With respect to regulation, by K-252a. Functionally, protein kinase that regulates many aspects of mycobacterial physiology. Is a key component of a signal transduction pathway that regulates cell growth, cell shape and cell division via phosphorylation of target proteins. Probably phosphorylates RseA. The protein is Serine/threonine-protein kinase PknB (pknB) of Mycolicibacterium smegmatis (strain ATCC 700084 / mc(2)155) (Mycobacterium smegmatis).